We begin with the raw amino-acid sequence, 1456 residues long: MEQGMDYWLGQIQQKDVGKRLQVGPDLIEYLLDRQKSIDLEQDQTLLDRMVDGLATSWVNSSNYKVALLGMDILSALVTRLQDRFRTQIGTVLPSLMDRLGDAKDSVRDQDQNLLIKIMEQASNPQYMWERMFSGFKHKNFRTREGVCLCLIATLNVYGANSLTLSKIVPHICNLLGDPNSQVRDAAINCLVEIYRHVGERVRADLSKKGLPQSRLNVIFTKFDEVQKSGTMILSTTDKNFDDEDSVDGNRPSSASSSASSKAPQTARRGVSLGTGRRPGTSSAAPKTGGTAKEGAGALDEEDFIRAFEDAPTVQIYSSRDLEESLNKIREILSDDKHDWEQRISALKKIRSLLLAGAAEYDNFFQQLRLLDGAFKLSAKDLRSQVVREACITLGHLSSVLGNKFDHGAEAVMPTVFNLVPNSTKIMATSGVVTIRLIIRHTHVPRLIPIITSNCTSKSVAVRRRCYEFLDLLLQEWQTHSLERHVSVLAETIKKGIHDADSEARIVARKCYWGFHGHFSKEAEQLFHALESSYQKALQSHLKNSDSIVSLPQSDRSSSSSQESLNRPLSAKRSPTGSTVSRATSKSTTGSLQRSRSDIDVNAAATSKTKAASGASTAPFSSVAALPPGSYASLGRIRTRRQSSGSTTSTASTPADTRGRSRAKVVSQSQPGSRSSSPGKLLGSSYGGIATGPQRVPQMPSEKRSKIPRSQGCSRETSPSRTVLDRFGISQPGRIPSAMRVLSSSTDLEAAVADALLLGDSRNKMKPVRRRYEPYGMYSDDDANSDASSACSERSYSSKNGGIPHYLRQTEDVAEVLNHCASSNWSERKEGLVGLQNLLKSQRLLSRVELKRLCEIFTRMFADPHSKRVFSMFLETLVDFVIIHKDDLQDWLFILLTQLLKKMGADLLGSVQAKVQKALDVTRDSFPFDQQFNILMRFIVDQTQTPNLKVKVAILKYIESLARQMDPTDFVNSSETRLAVSRIITWTTEPKSSDVRKAAQVVLISLFELNTPEFTMLLGALPKTFQDGATKLLHNHLKNSSNSSMGSPSNTIGRTPSRHSSSRASPLTSPTNCSHGGLSPSMLDYDTENLNSDEIYSSLRGVTEAIEKFSFRSQVDLNEPVRRDGKKESEMGSCDAGMASPASDLRGGTDMVEGGRMALDNKTSLLNTQPPRAFTGPRGREYNPYAYSDSINSYDKTALKEAVFDDDMDQLRDVPIDHSDLVADLLKELSNHNERVEERKGALCELLKITREDNLAVWEEHFKTILLLLLETLGDKDHAIRALALRVLREILRNQPARFKNYAELTIMKTLEAHKDSHKEVVRAAEEAASTLAGSIHPEQCIKVLCPIIQTADYPINLAAIKMQTKVIERISKESLHQILPDIIPGLLQGYDNTESSVRKASVFCLVAVYSVIGEELKPYLAQLTGSKMKLLNLYIKRAQTTNSNSSSSSDVSTHS.

HEAT repeat units lie at residues 68-87, 88-124, and 163-200; these read LLGM…RFRT, QIGT…QASN, and LTLS…HVGE. Positions 237 to 296 are disordered; the sequence is TDKNFDDEDSVDGNRPSSASSSASSKAPQTARRGVSLGTGRRPGTSSAAPKTGGTAKEGA. Low complexity predominate over residues 284–296; sequence AAPKTGGTAKEGA. The HEAT 4 repeat unit spans residues 442–479; sequence THVPRLIPIITSNCTSKSVAVRRRCYEFLDLLLQEWQT. Disordered stretches follow at residues 547 to 728 and 776 to 796; these read SIVS…DRFG and GMYS…ERSY. Over residues 550–569 the composition is skewed to low complexity; that stretch reads SLPQSDRSSSSSQESLNRPL. Residues 573-594 are compositionally biased toward polar residues; the sequence is RSPTGSTVSRATSKSTTGSLQR. Low complexity-rich tracts occupy residues 603–618, 642–656, and 665–679; these read AAAT…ASTA, QSSG…TPAD, and VVSQ…SSPG. A compositionally biased stretch (polar residues) spans 711 to 721; the sequence is QGCSRETSPSR. Over residues 785 to 796 the composition is skewed to low complexity; sequence SDASSACSERSY. One copy of the HEAT 5 repeat lies at 930 to 967; the sequence is QQFNILMRFIVDQTQTPNLKVKVAILKYIESLARQMDP. 2 disordered regions span residues 1037-1080 and 1121-1147; these read LKNS…GLSP and VRRD…DLRG. The segment covering 1038–1050 has biased composition (low complexity); the sequence is KNSSNSSMGSPSN. Over residues 1062–1074 the composition is skewed to polar residues; that stretch reads SRASPLTSPTNCS. Basic and acidic residues predominate over residues 1121–1130; it reads VRRDGKKESE. 2 HEAT repeats span residues 1260 to 1297 and 1378 to 1415; these read EHFK…NQPA and QILP…VIGE.

This sequence belongs to the CLASP family. In terms of assembly, interacts (via C-terminus) with clip1/clip-170, and cenpe.

It is found in the cytoplasm. Its subcellular location is the cytoskeleton. It localises to the microtubule organizing center. The protein resides in the centrosome. The protein localises to the chromosome. It is found in the centromere. Its subcellular location is the kinetochore. It localises to the spindle. The protein resides in the golgi apparatus. The protein localises to the trans-Golgi network. Functionally, microtubule plus-end tracking protein that promotes the stabilization of dynamic microtubules during anaphase. Plays a crucial role in chromatin-induced microtubule formation. May also act at microtubule minus ends. May be involved in the nucleation of noncentrosomal microtubules originating from the trans-Golgi network (TGN). The sequence is that of CLIP-associating protein 1-B from Xenopus laevis (African clawed frog).